The chain runs to 196 residues: Protein GrpE (196 aa).

The segment at methionine 1–aspartate 41 is disordered.

The protein belongs to the GrpE family. As to quaternary structure, homodimer.

Its subcellular location is the cytoplasm. Its function is as follows. Participates actively in the response to hyperosmotic and heat shock by preventing the aggregation of stress-denatured proteins, in association with DnaK and GrpE. It is the nucleotide exchange factor for DnaK and may function as a thermosensor. Unfolded proteins bind initially to DnaJ; upon interaction with the DnaJ-bound protein, DnaK hydrolyzes its bound ATP, resulting in the formation of a stable complex. GrpE releases ADP from DnaK; ATP binding to DnaK triggers the release of the substrate protein, thus completing the reaction cycle. Several rounds of ATP-dependent interactions between DnaJ, DnaK and GrpE are required for fully efficient folding. This is Protein GrpE from Klebsiella pneumoniae subsp. pneumoniae (strain ATCC 700721 / MGH 78578).